Here is a 118-residue protein sequence, read N- to C-terminus: UPF0342 protein BC_0880 (118 aa).

This sequence belongs to the UPF0342 family.

This is UPF0342 protein BC_0880 from Bacillus cereus (strain ATCC 14579 / DSM 31 / CCUG 7414 / JCM 2152 / NBRC 15305 / NCIMB 9373 / NCTC 2599 / NRRL B-3711).